The sequence spans 107 residues: MIIVTSNDIPGYKIAAVFGEVFGLTVRSRHIGSNLAASFKSIAGGELKGITQLLHESRREALARLAAEAEARGANAVVAFRFETTEYANTGVEVCAYGTAVGIQPIQ.

This sequence belongs to the UPF0145 family.

In Mycobacteroides abscessus (strain ATCC 19977 / DSM 44196 / CCUG 20993 / CIP 104536 / JCM 13569 / NCTC 13031 / TMC 1543 / L948) (Mycobacterium abscessus), this protein is UPF0145 protein MAB_3451c.